A 577-amino-acid chain; its full sequence is Arginine--tRNA ligase (577 aa).

The 'HIGH' region motif lies at 122-132; that stretch reads PNVAKEMHVGH.

The protein belongs to the class-I aminoacyl-tRNA synthetase family. In terms of assembly, monomer.

Its subcellular location is the cytoplasm. The catalysed reaction is tRNA(Arg) + L-arginine + ATP = L-arginyl-tRNA(Arg) + AMP + diphosphate. The chain is Arginine--tRNA ligase from Citrobacter koseri (strain ATCC BAA-895 / CDC 4225-83 / SGSC4696).